A 284-amino-acid chain; its full sequence is Probable O-methyltransferase ustE (284 aa).

Residues Asn-22 and Asn-29 are each glycosylated (N-linked (GlcNAc...) asparagine). Helical transmembrane passes span 88–108 (LLLL…VLTV) and 157–177 (YLAT…VCEI). N-linked (GlcNAc...) asparagine glycosylation occurs at Asn-205. Residues 215–235 (GLALASGGMIYGMSIAMFFMW) form a helical membrane-spanning segment. Asn-264 is a glycosylation site (N-linked (GlcNAc...) asparagine).

The protein belongs to the class VI-like SAM-binding methyltransferase superfamily. Isoprenylcysteine carboxyl methyltransferase family.

Its subcellular location is the membrane. It functions in the pathway secondary metabolite biosynthesis. Its function is as follows. Probable O-methyltransferase; part of the gene cluster that mediates the biosynthesis of ustilaginoidins, dimeric gamma-naphthopyrones isolated from different fungal species. The first step in the biosynthesis of ustilaginoidins is the production of gamma-naphthopyrone precursor YWA1 by the non-reducing polyketide synthase ustP, via condensation of one acetyl-CoA starter unit with 6 malonyl-CoA units. YWA1 is then probably substrate of the ustZ to yield norrubrofusarin via a dehydration reaction. A key enzyme in the biosynthetic pathway is the laccase ustL, which catalyzes the oxidative dimerization of norrubrofusarin to ustilaginoidin A. It can produce the M- and P-atropisomers in varying amounts, depending on the reaction conditions. For the biosynthesis of 3-methylustilaginoid in derivatives such as chaetochromin A, a methylated derivative of YWA1 is required. The C-methylation is considered to be catalyzed by ustM, the phosphopantetheine attachment site of which indicates that it acts on the growing polyketide chain before release of the product. For the biosynthesis of chaetochromin A, it is assumed that saturation of the D2 double bond takes place before dimerization, and is probably catalyzed by an external reductase because no candidate gene was identified within the cluster. In Ustilaginoidea virens (Rice false smut fungus), this protein is Probable O-methyltransferase ustE.